The following is a 160-amino-acid chain: MESPEGAGPGEIVKDVKVPQAALNVSAHETGDMCRTPVAEEEEEVGIPIPAPGFLQVTERRQPLSSVSSLEVHFDLLDLTELTDMSDQELAEVFADSDDENLATESPAGLHPLSRASCLRSPSWTKTRAEQNREKQPPSDPERQGTIVDTFLTVEEPKED.

Ser-3, Ser-97, and Ser-121 each carry phosphoserine. Positions 95–160 (ADSDDENLAT…FLTVEEPKED (66 aa)) are disordered. Basic and acidic residues predominate over residues 127–143 (TRAEQNREKQPPSDPER).

This sequence belongs to the dysbindin family.

The sequence is that of Dysbindin domain-containing protein 1 (Dbndd1) from Mus musculus (Mouse).